A 300-amino-acid chain; its full sequence is Ribosomal RNA small subunit methyltransferase H (300 aa).

Residues 46-48 (GGH), Asp65, Phe92, Asp107, and Gln114 contribute to the S-adenosyl-L-methionine site.

Belongs to the methyltransferase superfamily. RsmH family.

The protein localises to the cytoplasm. The enzyme catalyses cytidine(1402) in 16S rRNA + S-adenosyl-L-methionine = N(4)-methylcytidine(1402) in 16S rRNA + S-adenosyl-L-homocysteine + H(+). Its function is as follows. Specifically methylates the N4 position of cytidine in position 1402 (C1402) of 16S rRNA. The chain is Ribosomal RNA small subunit methyltransferase H from Prochlorococcus marinus subsp. pastoris (strain CCMP1986 / NIES-2087 / MED4).